The following is a 133-amino-acid chain: ATP synthase epsilon chain, chloroplastic (133 aa).

The protein belongs to the ATPase epsilon chain family. F-type ATPases have 2 components, CF(1) - the catalytic core - and CF(0) - the membrane proton channel. CF(1) has five subunits: alpha(3), beta(3), gamma(1), delta(1), epsilon(1). CF(0) has three main subunits: a, b and c.

It is found in the plastid. The protein resides in the chloroplast thylakoid membrane. In terms of biological role, produces ATP from ADP in the presence of a proton gradient across the membrane. The chain is ATP synthase epsilon chain, chloroplastic from Phaeodactylum tricornutum (strain CCAP 1055/1).